The primary structure comprises 162 residues: Peroxiredoxin-2C (162 aa).

The region spanning 4–162 is the Thioredoxin domain; sequence VAVGDTLPDG…SGAEEILKAL (159 aa). Cysteine 51 acts as the Cysteine sulfenic acid (-SOH) intermediate in catalysis.

This sequence belongs to the peroxiredoxin family. Prx5 subfamily. As to quaternary structure, monomer.

Its subcellular location is the cytoplasm. The catalysed reaction is [glutaredoxin]-dithiol + a hydroperoxide = [glutaredoxin]-disulfide + an alcohol + H2O. Functionally, reduces hydrogen peroxide and alkyl hydroperoxides with reducing equivalents provided through the thioredoxin or glutaredoxin system. May be involved in intracellular redox signaling. Its function is as follows. Thiol-specific peroxidase that catalyzes the reduction of hydrogen peroxide and organic hydroperoxides to water and alcohols, respectively. Plays a role in cell protection against oxidative stress by detoxifying peroxides. The polypeptide is Peroxiredoxin-2C (PRXIIC) (Oryza sativa subsp. japonica (Rice)).